Reading from the N-terminus, the 184-residue chain is Ras-related protein Rap-1b (184 aa).

10-18 (GSGGVGKSA) lines the GTP pocket. Residues 25 to 67 (QGIFVEKYDPTIEDSYRKQVEVDAQQCMLEILDTAGTEQFTAM) form an interaction with KRIT1 region. Positions 32 to 40 (YDPTIEDSY) match the Effector region motif. The residue at position 39 (Ser39) is an ADP-ribosylserine; by botulinum toxin. GTP is bound by residues 57-61 (DTAGT), 116-119 (NKCD), and 147-149 (SAK). Residue Ser179 is modified to Phosphoserine; by PKA. Residue Cys181 is modified to Cysteine methyl ester. Cys181 carries the S-geranylgeranyl cysteine lipid modification. A propeptide spans 182-184 (QLL) (removed in mature form).

Belongs to the small GTPase superfamily. Ras family. As to quaternary structure, heterodimer with RAP1GAP. Interacts with EPAC2. Interacts with SGSM1. Interacts with SGSM2. Interacts with SGSM3. Interacts with KRIT1. Interacts with RAP1GDS1.

The protein resides in the cell membrane. It is found in the cytoplasm. Its subcellular location is the cytosol. The protein localises to the cell junction. The enzyme catalyses GTP + H2O = GDP + phosphate + H(+). Activated by guanine nucleotide-exchange factor (GEF) EPAC2 in a cAMP-dependent manner. In terms of biological role, GTP-binding protein that possesses intrinsic GTPase activity. Contributes to the polarizing activity of KRIT1 and CDH5 in the establishment and maintenance of correct endothelial cell polarity and vascular lumen. Required for the localization of phosphorylated PRKCZ, PARD3 and TIAM1 to the cell junction. Plays a role in the establishment of basal endothelial barrier function. This is Ras-related protein Rap-1b (Rap1b) from Rattus norvegicus (Rat).